The chain runs to 1226 residues: MYGQVERKRVNFGKITNLDYLPNLIQIQKRSFDWFLQADVKDETKRRHQGLEAVFRETFPIESPNNDMIMEYSHYILGEPKRSPQECKDTDATFAMPLKAVIRLIIKETGEIREQTVYMGDLPVMTEQGTFIINGAERVVVSQLHRSPGIFFSYDMERDVFSARVIPYRGSWLEFEMDNKGILIAKIDRKKKFPATLLVKSLGHGTNEEVLRLFYSSKKEKIAGATSKDLKKILGRRTINDIINMETGEVMLEAGSKINEDNISILKEMKVKEVELIEFPKGKDNPILINALEKDGVNDYEDAILKFHSLMRQGEPSTIENATTELTRLFFSPKTFDLGEVGRYKINSKFEFNNPKEFSGEKSRVLRPADIIETVRYILNLFSETENYYPDDIDHLGNRRIRSVGELISNQLKTGFSRVERVIKERMTVQEIETQTPQLLISIKPITAVINEFFGSSQLSQFMDQTNPLAELTHKRRLNALGPGGLSRDRAGMEVRDVHYSHYGRMCPIETPEGPNIGLILSMSSYARVNDYGFLETPYRTVKNGKVTGQIEHLTADKEEYHYIAQASGVIDEKGELKNKLISTRHRGDFPFRNPSEIQYMDLAPLQVVSVSTALIPFLEHDDANRALMGSNMQRQAVPLLREEAPFVGTGMETRAAYDSRICIVNKHDGVVTSVDAENIVVERKGGKESDTYQLTKFKKTNQGTCFNQKPIVGVVHSEINGKVSKVSKEKIEVTGENGELKEYVLQIGSKQYSPIVSAGEEVKRGSTLAGQVVVGEKLDEMGNILVKGTVLADGPAVDNGVLALGRNVLAAFMPWEGYNFEDAILISERIVRDDVFSSIHIEEFEIQARETKLGPEQITRDIPNLSDKAFRDLDETGVIRIGAEVKPGDILVGMVTPKGETDLTPEYKLLHSIFGEKAKDVRDSSLRMPNGFEGTVIDIKRFSRENQDELPAGVEEMVKVFVARKRKLLVGDKMAGRHGNKGVVARVMAEEDMPYMEDGTPLDIVLNPLGVPSRMNLGQIFETQLGFAASKLGISFETPVFDGAEESDVDNFCKEANLPLNSKFKLYDGRTGLPFMNEVFCGYIYILKLAHLVEDKIHARSTGPYSLVTQQPLGGKAQFGGQRLGEMEVWALEAYGASHTLQELLTIKSDDMLGRARIYEAIVKGIHSIKPGIPESFNVLVQELRGLALDIIITDSEGNTVDISDYEDEYSKSKKKIKFETIENA.

Belongs to the RNA polymerase beta chain family. The RNAP catalytic core consists of 2 alpha, 1 beta, 1 beta' and 1 omega subunit. When a sigma factor is associated with the core the holoenzyme is formed, which can initiate transcription.

It carries out the reaction RNA(n) + a ribonucleoside 5'-triphosphate = RNA(n+1) + diphosphate. DNA-dependent RNA polymerase catalyzes the transcription of DNA into RNA using the four ribonucleoside triphosphates as substrates. The polypeptide is DNA-directed RNA polymerase subunit beta (Leptospira interrogans serogroup Icterohaemorrhagiae serovar copenhageni (strain Fiocruz L1-130)).